Consider the following 296-residue polypeptide: Light-independent protochlorophyllide reductase iron-sulfur ATP-binding protein (296 aa).

Positions 1 to 11 (MTSTITRKEDG) are enriched in basic and acidic residues. Residues 1 to 20 (MTSTITRKEDGEGSVQVKQD) form a disordered region. ATP-binding positions include 39–44 (GIGKST) and Lys68. Ser43 is a binding site for Mg(2+). Residues Cys124 and Cys158 each coordinate [4Fe-4S] cluster. 209-210 (NR) contributes to the ATP binding site.

The protein belongs to the NifH/BchL/ChlL family. In terms of assembly, homodimer. Protochlorophyllide reductase is composed of three subunits; ChlL, ChlN and ChlB. Requires [4Fe-4S] cluster as cofactor.

It catalyses the reaction chlorophyllide a + oxidized 2[4Fe-4S]-[ferredoxin] + 2 ADP + 2 phosphate = protochlorophyllide a + reduced 2[4Fe-4S]-[ferredoxin] + 2 ATP + 2 H2O. The protein operates within porphyrin-containing compound metabolism; chlorophyll biosynthesis (light-independent). In terms of biological role, component of the dark-operative protochlorophyllide reductase (DPOR) that uses Mg-ATP and reduced ferredoxin to reduce ring D of protochlorophyllide (Pchlide) to form chlorophyllide a (Chlide). This reaction is light-independent. The L component serves as a unique electron donor to the NB-component of the complex, and binds Mg-ATP. The chain is Light-independent protochlorophyllide reductase iron-sulfur ATP-binding protein from Prochlorococcus marinus (strain NATL1A).